The primary structure comprises 249 residues: Olfactory receptor 1571 (249 aa).

The helical transmembrane segment at 1-9 (LLMCNLCFA) threads the bilayer. Residues 10 to 40 (DICFTSASIPTNLVNIQTKNKVITYEGCISQ) lie on the Extracellular side of the membrane. A disulfide bond links C37 and C119. The chain crosses the membrane as a helical span at residues 41-60 (VYFFILFGVLDNFLLAVMAY). Residues 61-82 (DRYVAICHPLHYTVIMNRRLCG) are Cytoplasmic-facing. A helical transmembrane segment spans residues 83 to 103 (LLVLGSWVTTALNSLLQSSMA). At 104 to 136 (LRLSFCTDLKIPHFVCELNQLVLLACNDTFPND) the chain is on the extracellular side. N130 carries an N-linked (GlcNAc...) asparagine glycan. Residues 137–158 (MVMYFAAVLLGGGPLAGILYSY) form a helical membrane-spanning segment. Residues 159–180 (SKIVSSIRAISSSQGKYKAFST) are Cytoplasmic-facing. Residues 181 to 200 (CASHLSVVSLFYSTLLGVYL) form a helical membrane-spanning segment. Topologically, residues 201–210 (SSSFTQNSHS) are extracellular. Residues 211 to 232 (TARASVMYSVVTPMLNPFIYSL) traverse the membrane as a helical segment. Topologically, residues 233–249 (RNKDLMGALRRLFRRKP) are cytoplasmic.

The protein belongs to the G-protein coupled receptor 1 family. Tongue specific.

The protein resides in the cell membrane. Its function is as follows. Possible taste receptor. The protein is Olfactory receptor 1571 (Olr1571) of Rattus norvegicus (Rat).